The following is a 239-amino-acid chain: Transcriptional regulatory protein DcuR (239 aa).

The 119-residue stretch at 3 to 121 folds into the Response regulatory domain; sequence NVLIIDDDAM…RFEEALTGWR (119 aa). Asp-56 is modified (4-aspartylphosphate). Residues 181-200 constitute a DNA-binding region (H-T-H motif); that stretch reads TDELANEVNISRVSCRKYLI.

Post-translationally, phosphorylated and activated by DcuS.

It localises to the cytoplasm. In terms of biological role, member of the two-component regulatory system DcuR/DcuS. Involved in the C4-dicarboxylate-stimulated regulation of the genes encoding the anaerobic fumarate respiratory system (frdABCD; nuoAN; dcuB; dcuC; sdhCDAB; etc.). Weakly regulates the aerobic C4-dicarboxylate transporter dctA. This chain is Transcriptional regulatory protein DcuR (dcuR), found in Escherichia coli O157:H7.